We begin with the raw amino-acid sequence, 264 residues long: Protein hob3 (264 aa).

Positions 17-237 (VMMKTGHVER…FDNSVREDYS (221 aa)) constitute a BAR domain. 2 coiled-coil regions span residues 25 to 65 (ERTV…AMTA) and 165 to 187 (RTEK…LVSE).

The protein resides in the cytoplasm. It is found in the cytoskeleton. Its function is as follows. Involved in cytokinesis and septation where it has a role in the localization of F-actin. The protein is Protein hob3 (hob3) of Schizosaccharomyces pombe (strain 972 / ATCC 24843) (Fission yeast).